The sequence spans 157 residues: Probable succinate transporter subunit YjjB (157 aa).

4 consecutive transmembrane segments (helical) span residues 8-28 (FALA…AMVF), 50-70 (MILM…SMLV), 87-107 (VFTV…TAMI), and 129-149 (FLTA…PGLW).

This sequence belongs to the ThrE exporter (TC 2.A.79) family. As to quaternary structure, the transporter is composed of YjjB and YjjP.

The protein localises to the cell inner membrane. Involved in succinate export with YjjP. Both proteins are required for export. In Escherichia coli (strain ATCC 8739 / DSM 1576 / NBRC 3972 / NCIMB 8545 / WDCM 00012 / Crooks), this protein is Probable succinate transporter subunit YjjB.